Reading from the N-terminus, the 183-residue chain is uncharacterized protein (183 aa).

The protein belongs to the asfivirus S183L family.

This is an uncharacterized protein from Ornithodoros (relapsing fever ticks).